A 131-amino-acid chain; its full sequence is Holo-[acyl-carrier-protein] synthase (131 aa).

The Mg(2+) site is built by D8 and E63.

It belongs to the P-Pant transferase superfamily. AcpS family. Mg(2+) is required as a cofactor.

The protein resides in the cytoplasm. The enzyme catalyses apo-[ACP] + CoA = holo-[ACP] + adenosine 3',5'-bisphosphate + H(+). Transfers the 4'-phosphopantetheine moiety from coenzyme A to a Ser of acyl-carrier-protein. The sequence is that of Holo-[acyl-carrier-protein] synthase from Shewanella pealeana (strain ATCC 700345 / ANG-SQ1).